The following is a 465-amino-acid chain: tRNA modification GTPase MnmE (465 aa).

R21, E85, and K124 together coordinate (6S)-5-formyl-5,6,7,8-tetrahydrofolate. A TrmE-type G domain is found at G220–H387. A K(+)-binding site is contributed by N230. GTP is bound by residues N230–T235, S249–T255, and D274–G277. S234 is a binding site for Mg(2+). K(+)-binding residues include S249, I251, and T254. T255 is a Mg(2+) binding site. K465 is a binding site for (6S)-5-formyl-5,6,7,8-tetrahydrofolate.

Belongs to the TRAFAC class TrmE-Era-EngA-EngB-Septin-like GTPase superfamily. TrmE GTPase family. In terms of assembly, homodimer. Heterotetramer of two MnmE and two MnmG subunits. The cofactor is K(+).

It localises to the cytoplasm. Functionally, exhibits a very high intrinsic GTPase hydrolysis rate. Involved in the addition of a carboxymethylaminomethyl (cmnm) group at the wobble position (U34) of certain tRNAs, forming tRNA-cmnm(5)s(2)U34. This is tRNA modification GTPase MnmE from Bacteroides fragilis (strain YCH46).